The primary structure comprises 150 residues: Transcriptional repressor NrdR (150 aa).

The segment at 3–34 (CPFCAFADSKVVDSRPDKEGSTIRRRRECESC) is a zinc-finger region. The ATP-cone domain maps to 49 to 139 (PLVIKKDGRR…VYRSFKDITE (91 aa)).

The protein belongs to the NrdR family. Requires Zn(2+) as cofactor.

Its function is as follows. Negatively regulates transcription of bacterial ribonucleotide reductase nrd genes and operons by binding to NrdR-boxes. The protein is Transcriptional repressor NrdR of Geotalea daltonii (strain DSM 22248 / JCM 15807 / FRC-32) (Geobacter daltonii).